Here is a 434-residue protein sequence, read N- to C-terminus: Cytochrome b-c1 complex subunit 2, mitochondrial (434 aa).

The transit peptide at 1 to 31 (MYSLNRLPRSAAFKSSANLLRRNASTTSAGG) directs the protein to the mitochondrion.

This sequence belongs to the peptidase M16 family. UQCRC2/QCR2 subfamily. As to quaternary structure, component of the ubiquinol-cytochrome c oxidoreductase (cytochrome b-c1 complex, complex III, CIII), a multisubunit enzyme composed of 10 subunits. The complex is composed of 3 respiratory subunits cytochrome b (COB), cytochrome c1 (CYT1) and Rieske protein (RIP1), 2 core protein subunits COR1 and QCR2, and 5 low-molecular weight protein subunits QCR6, QCR7, QCR8, QCR9 and QCR10. The complex exists as an obligatory dimer and forms supercomplexes (SCs) in the inner mitochondrial membrane with a monomer or a dimer of cytochrome c oxidase (complex IV, CIV), resulting in 2 different assemblies (supercomplexes III(2)IV and III(2)IV(2)). Interacts with MRJ1.

It is found in the mitochondrion inner membrane. Component of the ubiquinol-cytochrome c oxidoreductase, a multisubunit transmembrane complex that is part of the mitochondrial electron transport chain which drives oxidative phosphorylation. The respiratory chain contains 3 multisubunit complexes succinate dehydrogenase (complex II, CII), ubiquinol-cytochrome c oxidoreductase (cytochrome b-c1 complex, complex III, CIII) and cytochrome c oxidase (complex IV, CIV), that cooperate to transfer electrons derived from NADH and succinate to molecular oxygen, creating an electrochemical gradient over the inner membrane that drives transmembrane transport and the ATP synthase. The cytochrome b-c1 complex catalyzes electron transfer from ubiquinol to cytochrome c, linking this redox reaction to translocation of protons across the mitochondrial inner membrane, with protons being carried across the membrane as hydrogens on the quinol. In the process called Q cycle, 2 protons are consumed from the matrix, 4 protons are released into the intermembrane space and 2 electrons are passed to cytochrome c. This Cryptococcus neoformans var. grubii serotype A (strain H99 / ATCC 208821 / CBS 10515 / FGSC 9487) (Filobasidiella neoformans var. grubii) protein is Cytochrome b-c1 complex subunit 2, mitochondrial.